The sequence spans 66 residues: Beta-mammal toxin Cv2 (66 aa).

The 66-residue stretch at 1–66 folds into the LCN-type CS-alpha/beta domain; it reads KEGYIVNHST…VWPLPKKTCN (66 aa). 4 cysteine pairs are disulfide-bonded: C12–C65, C16–C41, C25–C46, and C29–C48.

In terms of tissue distribution, expressed by the venom gland.

Its subcellular location is the secreted. Is susceptible to be slightly neutralized by human antibodies scFvs 10FG2. Functionally, beta toxins bind voltage-independently at site-4 of sodium channels (Nav) and reduces peak current and shifts the voltage of activation toward more negative potentials thereby affecting sodium channel activation and promoting spontaneous and repetitive firing. This toxin is slightly toxic to mice. The polypeptide is Beta-mammal toxin Cv2 (Centruroides villegasi (Scorpion)).